The primary structure comprises 89 residues: Small ribosomal subunit protein uS15 (89 aa).

The protein belongs to the universal ribosomal protein uS15 family. In terms of assembly, part of the 30S ribosomal subunit. Forms a bridge to the 50S subunit in the 70S ribosome, contacting the 23S rRNA.

Functionally, one of the primary rRNA binding proteins, it binds directly to 16S rRNA where it helps nucleate assembly of the platform of the 30S subunit by binding and bridging several RNA helices of the 16S rRNA. In terms of biological role, forms an intersubunit bridge (bridge B4) with the 23S rRNA of the 50S subunit in the ribosome. This Lactobacillus gasseri (strain ATCC 33323 / DSM 20243 / BCRC 14619 / CIP 102991 / JCM 1131 / KCTC 3163 / NCIMB 11718 / NCTC 13722 / AM63) protein is Small ribosomal subunit protein uS15.